A 386-amino-acid chain; its full sequence is Acetylornithine aminotransferase (386 aa).

Residues Gly96–Ala97 and Phe123 contribute to the pyridoxal 5'-phosphate site. Arg126 contacts N(2)-acetyl-L-ornithine. Asp208–Gln211 lines the pyridoxal 5'-phosphate pocket. Lys237 is modified (N6-(pyridoxal phosphate)lysine). Ser265 serves as a coordination point for N(2)-acetyl-L-ornithine. Thr266 contacts pyridoxal 5'-phosphate.

The protein belongs to the class-III pyridoxal-phosphate-dependent aminotransferase family. ArgD subfamily. As to quaternary structure, homodimer. Pyridoxal 5'-phosphate is required as a cofactor.

It is found in the cytoplasm. The catalysed reaction is N(2)-acetyl-L-ornithine + 2-oxoglutarate = N-acetyl-L-glutamate 5-semialdehyde + L-glutamate. It participates in amino-acid biosynthesis; L-arginine biosynthesis; N(2)-acetyl-L-ornithine from L-glutamate: step 4/4. This is Acetylornithine aminotransferase from Bacillus cereus (strain ATCC 14579 / DSM 31 / CCUG 7414 / JCM 2152 / NBRC 15305 / NCIMB 9373 / NCTC 2599 / NRRL B-3711).